Reading from the N-terminus, the 248-residue chain is UDP-N-acetyl-D-mannosaminuronic acid transferase (248 aa).

The protein belongs to the glycosyltransferase 26 family.

The enzyme catalyses UDP-N-acetyl-alpha-D-mannosaminouronate + N-acetyl-alpha-D-glucosaminyl-di-trans,octa-cis-undecaprenyl diphosphate = beta-D-ManNAcA-(1-&gt;4)-alpha-D-GlcNAc-di-trans,octa-cis-undecaprenyl diphosphate + UDP + H(+). It participates in bacterial outer membrane biogenesis; enterobacterial common antigen biosynthesis. Catalyzes the synthesis of Und-PP-GlcNAc-ManNAcA (Lipid II), the second lipid-linked intermediate involved in enterobacterial common antigen (ECA) synthesis. The sequence is that of UDP-N-acetyl-D-mannosaminuronic acid transferase from Klebsiella pneumoniae subsp. pneumoniae (strain ATCC 700721 / MGH 78578).